Here is a 272-residue protein sequence, read N- to C-terminus: 2-succinyl-6-hydroxy-2,4-cyclohexadiene-1-carboxylate synthase (272 aa).

Belongs to the AB hydrolase superfamily. MenH family. In terms of assembly, monomer.

It catalyses the reaction 5-enolpyruvoyl-6-hydroxy-2-succinyl-cyclohex-3-ene-1-carboxylate = (1R,6R)-6-hydroxy-2-succinyl-cyclohexa-2,4-diene-1-carboxylate + pyruvate. It participates in quinol/quinone metabolism; 1,4-dihydroxy-2-naphthoate biosynthesis; 1,4-dihydroxy-2-naphthoate from chorismate: step 3/7. Its pathway is quinol/quinone metabolism; menaquinone biosynthesis. Its function is as follows. Catalyzes a proton abstraction reaction that results in 2,5-elimination of pyruvate from 2-succinyl-5-enolpyruvyl-6-hydroxy-3-cyclohexene-1-carboxylate (SEPHCHC) and the formation of 2-succinyl-6-hydroxy-2,4-cyclohexadiene-1-carboxylate (SHCHC). The sequence is that of 2-succinyl-6-hydroxy-2,4-cyclohexadiene-1-carboxylate synthase from Yersinia pseudotuberculosis serotype IB (strain PB1/+).